The primary structure comprises 98 residues: Integration host factor subunit alpha (98 aa).

Residues 49–70 form a disordered region; that stretch reads FGNFDLRDKNQRPGRNPKTGED.

The protein belongs to the bacterial histone-like protein family. In terms of assembly, heterodimer of an alpha and a beta chain.

Its function is as follows. This protein is one of the two subunits of integration host factor, a specific DNA-binding protein that functions in genetic recombination as well as in transcriptional and translational control. The chain is Integration host factor subunit alpha from Yersinia pestis.